Here is a 684-residue protein sequence, read N- to C-terminus: Hydroxyproline O-galactosyltransferase GALT2 (684 aa).

Residues 1-22 (MKRVKSESFRGVYSSRRFKLSH) are Cytoplasmic-facing. The helical; Signal-anchor for type II membrane protein transmembrane segment at 23–43 (FLLAIAGFYLVFLAFKFPHFI) threads the bilayer. Topologically, residues 44-684 (EMVAMLSGDT…KGRPQCCNFR (641 aa)) are lumenal. The interval 80–102 (KLEDEDHQSGPSTTQKVSPEEKI) is disordered. N-linked (GlcNAc...) asparagine glycosylation is found at Asn103, Asn127, and Asn162. A Galectin domain is found at 191–405 (RIMLLPCGLA…DVDIHSIHAT (215 aa)). 2 N-linked (GlcNAc...) asparagine glycosylation sites follow: Asn524 and Asn632.

It belongs to the glycosyltransferase 31 family. Mn(2+) is required as a cofactor. In terms of tissue distribution, expressed in stems and at lower levels in cauline leaves and siliques.

It localises to the golgi apparatus membrane. It functions in the pathway protein modification; protein glycosylation. In terms of biological role, possesses hydroxyproline O-galactosyltransferase activity. Transfers galactose from UDP-galactose to hydroxyproline residues in the arabinogalactan proteins (AGPs). Is specific for AGPs containing non-contiguous peptidyl hydroxyproline residues. Utilizes UDP-galactose solely as sugar donor. The addition of galactose onto the peptidyl hydroxyproline residues in AGP core proteins represents the first committed step in arabinogalactan polysaccharide addition. AGP glycans play essential roles in both vegetative and reproductive plant growth. In Arabidopsis thaliana (Mouse-ear cress), this protein is Hydroxyproline O-galactosyltransferase GALT2.